The sequence spans 92 residues: Small ribosomal subunit protein uS19 (92 aa).

Belongs to the universal ribosomal protein uS19 family.

Protein S19 forms a complex with S13 that binds strongly to the 16S ribosomal RNA. The protein is Small ribosomal subunit protein uS19 of Parvibaculum lavamentivorans (strain DS-1 / DSM 13023 / NCIMB 13966).